Here is a 116-residue protein sequence, read N- to C-terminus: Ribonuclease P protein component (116 aa).

The protein belongs to the RnpA family. As to quaternary structure, consists of a catalytic RNA component (M1 or rnpB) and a protein subunit.

It carries out the reaction Endonucleolytic cleavage of RNA, removing 5'-extranucleotides from tRNA precursor.. Functionally, RNaseP catalyzes the removal of the 5'-leader sequence from pre-tRNA to produce the mature 5'-terminus. It can also cleave other RNA substrates such as 4.5S RNA. The protein component plays an auxiliary but essential role in vivo by binding to the 5'-leader sequence and broadening the substrate specificity of the ribozyme. The chain is Ribonuclease P protein component from Leuconostoc citreum (strain KM20).